Consider the following 427-residue polypeptide: Adenylosuccinate synthetase (427 aa).

Residues 12–18 (GDEGKGK) and 40–42 (GHT) contribute to the GTP site. Asp13 acts as the Proton acceptor in catalysis. Asp13 and Gly40 together coordinate Mg(2+). Residues 13 to 16 (DEGK), 38 to 41 (NAGH), Thr128, Arg142, Gln223, Thr238, and Arg302 contribute to the IMP site. His41 functions as the Proton donor in the catalytic mechanism. Position 298–304 (298–304 (TTTGRPR)) interacts with substrate. Residues Arg304, 330–332 (KLD), and 412–414 (GVG) contribute to the GTP site.

It belongs to the adenylosuccinate synthetase family. As to quaternary structure, homodimer. Mg(2+) is required as a cofactor.

It is found in the cytoplasm. It carries out the reaction IMP + L-aspartate + GTP = N(6)-(1,2-dicarboxyethyl)-AMP + GDP + phosphate + 2 H(+). Its pathway is purine metabolism; AMP biosynthesis via de novo pathway; AMP from IMP: step 1/2. Plays an important role in the de novo pathway of purine nucleotide biosynthesis. Catalyzes the first committed step in the biosynthesis of AMP from IMP. In Pelotomaculum thermopropionicum (strain DSM 13744 / JCM 10971 / SI), this protein is Adenylosuccinate synthetase.